A 698-amino-acid polypeptide reads, in one-letter code: Polyribonucleotide nucleotidyltransferase (698 aa).

2 residues coordinate Mg(2+): Asp490 and Asp496. Residues 557 to 616 (PKVVTMTIKPDKIRDVIGPGGKKINEIIDETGVKLDIEQDGTIFIGAVDQAMINRAREII) enclose the KH domain. An S1 motif domain is found at 626-694 (GQTYQATVKR…KQGRVNASHR (69 aa)).

The protein belongs to the polyribonucleotide nucleotidyltransferase family. Requires Mg(2+) as cofactor.

Its subcellular location is the cytoplasm. It catalyses the reaction RNA(n+1) + phosphate = RNA(n) + a ribonucleoside 5'-diphosphate. Involved in mRNA degradation. Catalyzes the phosphorolysis of single-stranded polyribonucleotides processively in the 3'- to 5'-direction. The chain is Polyribonucleotide nucleotidyltransferase from Staphylococcus aureus (strain MSSA476).